The following is a 1215-amino-acid chain: Inner capsid protein VP3 (1215 aa).

A disordered region spans residues 1 to 81 (MPRRPRRNAK…RVDNDGDVIT (81 aa)). Positions 21–44 (LVAPAANASVSSTVNTTTSPTLAA) are enriched in low complexity. The C2H2-type zinc-finger motif lies at 118 to 141 (YRCNVCNAEFPSMSAMTEHLRTSH).

Belongs to the turreted BTV-fold inner capsid family. In terms of assembly, homodecamer; each decamer is made up of two conformers of VP2, called VP2A and VP2B. 12 homodecamers assemble to form an icosahedral capsid. Interacts with VP6.

The protein resides in the virion. Its function is as follows. Inner capsid protein that self-assembles to form an icosahedral capsid with a T=2 symmetry, which consists of 120 copies of VP2, with channels at each of its five-fold vertices. This capsid constitutes the innermost concentric layer of the viral mature particle. The chain is Inner capsid protein VP3 (S3) from Ctenopharyngodon idella (Grass carp).